A 182-amino-acid chain; its full sequence is Ribosome maturation factor RimM (182 aa).

Residues 99–176 enclose the PRC barrel domain; the sequence is DDEYYHADLI…ELPAEIEGDT (78 aa).

This sequence belongs to the RimM family. In terms of assembly, binds ribosomal protein uS19.

It localises to the cytoplasm. Functionally, an accessory protein needed during the final step in the assembly of 30S ribosomal subunit, possibly for assembly of the head region. Essential for efficient processing of 16S rRNA. May be needed both before and after RbfA during the maturation of 16S rRNA. It has affinity for free ribosomal 30S subunits but not for 70S ribosomes. The sequence is that of Ribosome maturation factor RimM from Rhodopseudomonas palustris (strain HaA2).